The primary structure comprises 113 residues: Pro-FMRFamide-related neuropeptide FF (113 aa).

Residues 1 to 20 form the signal peptide; the sequence is MDSRQAAALLVLLLLIDGGC. Positions 21-65 are excised as a propeptide; it reads AEGPGGQQEDQLSAEEDSEPLPPQDAQTSGSLLHYLLQAMERPGR. Residues 22–48 form a disordered region; that stretch reads EGPGGQQEDQLSAEEDSEPLPPQDAQT. The residue at position 76 (Phe76) is a Phenylalanine amide. The propeptide occupies 79–92; it reads NTQGSWRNEWLSPR. A Phenylalanine amide modification is found at Phe110.

This sequence belongs to the FARP (FMRFamide related peptide) family.

The protein resides in the secreted. Functionally, morphine modulating peptides. Have wide-ranging physiologic effects, including the modulation of morphine-induced analgesia, elevation of arterial blood pressure, and increased somatostatin secretion from the pancreas. Neuropeptide FF potentiates and sensitizes ASIC1 and ASIC3 channels. The sequence is that of Pro-FMRFamide-related neuropeptide FF from Homo sapiens (Human).